The following is a 324-amino-acid chain: 4-hydroxy-2-oxoglutarate aldolase, mitochondrial (324 aa).

A mitochondrion-targeting transit peptide spans 1-22 (MFAHRSFSLLCRRSAVTSWRSQ). Position 74-75 (74-75 (SN)) interacts with substrate. Catalysis depends on lysine 193, which acts as the Schiff-base intermediate with substrate. Substrate is bound by residues serine 195 and glycine 219.

It belongs to the DapA family. In terms of assembly, homotetramer.

The protein localises to the mitochondrion. It carries out the reaction (4S)-4-hydroxy-2-oxoglutarate = glyoxylate + pyruvate. It catalyses the reaction (4R)-4-hydroxy-2-oxoglutarate = glyoxylate + pyruvate. Inhibited by divalent cations. Its function is as follows. Catalyzes the final step in the metabolic pathway of hydroxyproline. This chain is 4-hydroxy-2-oxoglutarate aldolase, mitochondrial, found in Danio rerio (Zebrafish).